A 512-amino-acid chain; its full sequence is Bifunctional purine biosynthesis protein PurH (512 aa).

In terms of domain architecture, MGS-like spans 1 to 144; the sequence is MKRALVSVSD…KNYRDVVVVV (144 aa).

This sequence belongs to the PurH family.

The enzyme catalyses (6R)-10-formyltetrahydrofolate + 5-amino-1-(5-phospho-beta-D-ribosyl)imidazole-4-carboxamide = 5-formamido-1-(5-phospho-D-ribosyl)imidazole-4-carboxamide + (6S)-5,6,7,8-tetrahydrofolate. It catalyses the reaction IMP + H2O = 5-formamido-1-(5-phospho-D-ribosyl)imidazole-4-carboxamide. It participates in purine metabolism; IMP biosynthesis via de novo pathway; 5-formamido-1-(5-phospho-D-ribosyl)imidazole-4-carboxamide from 5-amino-1-(5-phospho-D-ribosyl)imidazole-4-carboxamide (10-formyl THF route): step 1/1. It functions in the pathway purine metabolism; IMP biosynthesis via de novo pathway; IMP from 5-formamido-1-(5-phospho-D-ribosyl)imidazole-4-carboxamide: step 1/1. The polypeptide is Bifunctional purine biosynthesis protein PurH (Ligilactobacillus salivarius (strain UCC118) (Lactobacillus salivarius)).